A 920-amino-acid chain; its full sequence is Rho GTPase-activating protein REN1 (920 aa).

Over residues 1 to 10 (MANKNAESSS) the composition is skewed to polar residues. Residues 1–64 (MANKNAESSS…SRGGNTVFKS (64 aa)) are disordered. The span at 17–31 (QPNQQQQQQPPIANE) shows a compositional bias: low complexity. Positions 45–64 (PAQSGNTDSRSRGGNTVFKS) are enriched in polar residues. The PH domain occupies 60–167 (TVFKSGPLSI…WKAALENALT (108 aa)). Residues 213–412 (LALEDVDGAP…TLLEEYESIF (200 aa)) form the Rho-GAP domain. 3 disordered regions span residues 417–592 (LSPG…NLSM), 719–825 (RLGH…ALSK), and 837–920 (RSQI…TFSR). Residues 434–463 (EGSDDEEYDDDDDGSQGSEDYTDEEEDLEN) show a composition bias toward acidic residues. Over residues 464–473 (ESNGSYSESA) the composition is skewed to polar residues. Composition is skewed to basic and acidic residues over residues 475 to 491 (SEDK…HKIN), 499 to 509 (KSPKRSKEPKK), and 520 to 532 (PRHD…EDIV). A compositionally biased stretch (polar residues) spans 555–568 (SSTSDVASDTQKPS). The segment covering 577-586 (SKRHWGRTPG) has biased composition (basic residues). Residues 598-728 (SVEVDEDNAD…RLGHHDGKAS (131 aa)) adopt a coiled-coil conformation. 2 stretches are compositionally biased toward basic and acidic residues: residues 734 to 768 (ASKE…RSTS) and 776 to 788 (RENE…DSRS). The span at 814-825 (EGSTTTTSALSK) shows a compositional bias: low complexity. Composition is skewed to polar residues over residues 854–864 (GQPSPTSGQNR) and 872–885 (GSGS…SKLQ). A compositionally biased stretch (basic and acidic residues) spans 889 to 903 (ILDRGRSENGGDRGR). The span at 910–920 (HPNTTPRTFSR) shows a compositional bias: polar residues.

Interacts with ARAC11/ROP1. As to expression, expressed in pollen and pollen tubes.

Its subcellular location is the cell membrane. Functionally, acts as a GTPase activator for the Rac-type GTPase by converting it to an inactive GDP-bound state. Maintains the global inactivation of ARAC11/ROP1 at the apex in pollen tubes in order to regulate the polar cell growth. In Arabidopsis thaliana (Mouse-ear cress), this protein is Rho GTPase-activating protein REN1 (REN1).